Reading from the N-terminus, the 159-residue chain is Phosphopantetheine adenylyltransferase (159 aa).

Ser-9 is a substrate binding site. Residues 9-10 (SF) and His-17 contribute to the ATP site. Substrate-binding residues include Lys-41, Leu-74, and Lys-88. Residues 89 to 91 (GLR), Glu-99, and 123 to 129 (YGYISST) contribute to the ATP site.

Belongs to the bacterial CoaD family. As to quaternary structure, homohexamer. Mg(2+) is required as a cofactor.

It is found in the cytoplasm. It catalyses the reaction (R)-4'-phosphopantetheine + ATP + H(+) = 3'-dephospho-CoA + diphosphate. It functions in the pathway cofactor biosynthesis; coenzyme A biosynthesis; CoA from (R)-pantothenate: step 4/5. Its function is as follows. Reversibly transfers an adenylyl group from ATP to 4'-phosphopantetheine, yielding dephospho-CoA (dPCoA) and pyrophosphate. This chain is Phosphopantetheine adenylyltransferase, found in Corynebacterium diphtheriae (strain ATCC 700971 / NCTC 13129 / Biotype gravis).